Consider the following 339-residue polypeptide: D-erythrose-4-phosphate dehydrogenase (339 aa).

NAD(+)-binding positions include 12–13 and Arg81; that span reads RI. Substrate is bound by residues 154–156, Arg200, 213–214, and Arg236; these read SCT and TK. Cys155 functions as the Nucleophile in the catalytic mechanism. An NAD(+)-binding site is contributed by Asn318.

It belongs to the glyceraldehyde-3-phosphate dehydrogenase family. Epd subfamily. In terms of assembly, homotetramer.

It is found in the cytoplasm. It catalyses the reaction D-erythrose 4-phosphate + NAD(+) + H2O = 4-phospho-D-erythronate + NADH + 2 H(+). It functions in the pathway cofactor biosynthesis; pyridoxine 5'-phosphate biosynthesis; pyridoxine 5'-phosphate from D-erythrose 4-phosphate: step 1/5. In terms of biological role, catalyzes the NAD-dependent conversion of D-erythrose 4-phosphate to 4-phosphoerythronate. The chain is D-erythrose-4-phosphate dehydrogenase from Escherichia coli (strain UTI89 / UPEC).